Consider the following 133-residue polypeptide: Alpha-amylase inhibitor/endochitinase (133 aa).

Glutamate 30 functions as the Proton donor in the catalytic mechanism.

The protein belongs to the glycosyl hydrolase 19 family. Chitinase class I subfamily.

It catalyses the reaction Random endo-hydrolysis of N-acetyl-beta-D-glucosaminide (1-&gt;4)-beta-linkages in chitin and chitodextrins.. This protein functions both as an alpha-amylase inhibitor and as a chitinase. This Coix lacryma-jobi (Job's tears) protein is Alpha-amylase inhibitor/endochitinase.